Here is a 507-residue protein sequence, read N- to C-terminus: ATP synthase subunit beta (507 aa).

Positions 1–22 are disordered; it reads MSSLANKAKSKGKSSKSKSNVN. 183–190 is an ATP binding site; sequence GGAGVGKT.

This sequence belongs to the ATPase alpha/beta chains family. F-type ATPases have 2 components, CF(1) - the catalytic core - and CF(0) - the membrane proton channel. CF(1) has five subunits: alpha(3), beta(3), gamma(1), delta(1), epsilon(1). CF(0) has three main subunits: a(1), b(2) and c(9-12). The alpha and beta chains form an alternating ring which encloses part of the gamma chain. CF(1) is attached to CF(0) by a central stalk formed by the gamma and epsilon chains, while a peripheral stalk is formed by the delta and b chains.

Its subcellular location is the cell inner membrane. The enzyme catalyses ATP + H2O + 4 H(+)(in) = ADP + phosphate + 5 H(+)(out). Produces ATP from ADP in the presence of a proton gradient across the membrane. The catalytic sites are hosted primarily by the beta subunits. This is ATP synthase subunit beta from Ehrlichia canis (strain Jake).